Reading from the N-terminus, the 284-residue chain is MDAIKKKMQAMKLEKDNAIDKADTCENQAKDANSRADKLNEEVRDLEKKFVQVEIDLVTAKEQLEKANTELEEKEKLLTATESEVATQNRKVQQIEEDLEKSEERSTTAQQKLLEATQSADENNRMCKVLENRSQQDEERMDQLTNQLKEARMLAEDADTKSDEVSRKLAFVEDELEVAEDRVRSGESKIMELEEELKVVGNSLKSLEVSEEKANQRVEEFKREMKTLSIKLKEAEQRAEHAEKQVKRLQKEVDRLEDRLFNEKEKYKAICDDLDQTFAELTGY.

Positions 1–284 (MDAIKKKMQA…DQTFAELTGY (284 aa)) form a coiled coil. Residues 82-110 (ESEVATQNRKVQQIEEDLEKSEERSTTAQ) form a disordered region.

This sequence belongs to the tropomyosin family. In terms of assembly, homodimer.

In terms of biological role, tropomyosin, in association with the troponin complex, plays a central role in the calcium dependent regulation of muscle contraction. May also regulate motor systems required to maintain nuclear integrity and apico-basal polarity during embryogenesis. The polypeptide is Tropomyosin-2 (Tm2) (Drosophila melanogaster (Fruit fly)).